Here is a 218-residue protein sequence, read N- to C-terminus: uncharacterized protein (218 aa).

The Toprim domain occupies 111-193 (NSIYLVEGDF…ITKVIEIKAA (83 aa)).

This is an uncharacterized protein from Mycoplasma genitalium (strain ATCC 33530 / DSM 19775 / NCTC 10195 / G37) (Mycoplasmoides genitalium).